Reading from the N-terminus, the 163-residue chain is NADH-quinone oxidoreductase subunit I (163 aa).

2 4Fe-4S ferredoxin-type domains span residues Leu-54–His-84 and Thr-94–Leu-123. Positions 64, 67, 70, 74, 103, 106, 109, and 113 each coordinate [4Fe-4S] cluster.

Belongs to the complex I 23 kDa subunit family. NDH-1 is composed of 14 different subunits. Subunits NuoA, H, J, K, L, M, N constitute the membrane sector of the complex. The cofactor is [4Fe-4S] cluster.

It is found in the cell inner membrane. The catalysed reaction is a quinone + NADH + 5 H(+)(in) = a quinol + NAD(+) + 4 H(+)(out). NDH-1 shuttles electrons from NADH, via FMN and iron-sulfur (Fe-S) centers, to quinones in the respiratory chain. The immediate electron acceptor for the enzyme in this species is believed to be ubiquinone. Couples the redox reaction to proton translocation (for every two electrons transferred, four hydrogen ions are translocated across the cytoplasmic membrane), and thus conserves the redox energy in a proton gradient. This Halorhodospira halophila (strain DSM 244 / SL1) (Ectothiorhodospira halophila (strain DSM 244 / SL1)) protein is NADH-quinone oxidoreductase subunit I.